Here is a 501-residue protein sequence, read N- to C-terminus: MRRNLSHIIAAAFNEPLLLEPAYARVFFCALGREMGAASLSVPQQQVQFDAPGMLAETDEYMAGGKRPARVYRVVNGIAVLPVTGTLVHRLGGMRPFSGMTGYDGIVACLQQAMADSQVRGVLLDIDSPGGQAAGAFDCADMIYRLRQQKPVWALCNDTACSAAMLLASACSRRLVTQTSRIGSIGVMMSHVSYAGHLAQAGVDITLIYSGAHKVDGNQFEALPAEVRQDMQQRIDAARRMFAEKVAMYTGLSVDAVTGTEAAVFEGQSGIEAGLADELINASDAISVMATALNSNVRGGTMPQLTATEAAAQENQRVMGILTCQEAKGREQLATMLAGQQGMSVEQARAILAAAAPQQPVASTQSEADRIMVCEEANGREQLAATLAAMPEMTVEKARPILAASPQADAGPSLRDQIMALDEAKGAEAQAEQLAACPGMTVESARAVLAAGSGKAEPVSASTTAMFEHFMANHSPAAVQGGVAQTSADGDADVKMLMAMP.

Residue serine 162 is the Nucleophile of the active site. Catalysis depends on lysine 214, which acts as the Proton donor/acceptor. TRI repeat units follow at residues 321 to 358 (ILTC…AAPQ), 371 to 417 (IMVC…LRDQ), and 418 to 455 (IMAL…GSGK). Residues 321–455 (ILTCQEAKGR…RAVLAAGSGK (135 aa)) are 3 X 38 AA repeats.

Belongs to the peptidase S49 family.

Functionally, scaffold protein GP6 forms the scaffold for capsid assembly and is required for binding of the 5 and 4 protein products. It is subsequently lost from the head during maturation. This is Head-tail preconnector protein GP5 (5) from Escherichia coli (Bacteriophage 21).